A 789-amino-acid polypeptide reads, in one-letter code: Zinc finger FYVE domain-containing protein 1 (789 aa).

Residues 416-788 are required for localization in the lipid droplets; sequence MAHSSFFPDE…LSVMTGKGPL (373 aa). 2 consecutive FYVE-type zinc fingers follow at residues 598–659 and 715–775; these read NSQI…EARN and DHEI…KKPA. Residues C604, C607, C620, C623, C628, C631, C651, C654, C721, C724, C737, C740, C745, C748, C767, and C770 each coordinate Zn(2+).

In terms of assembly, interacts with RAB18 (in GTP-bound form). Interacts with BSCL2 in a RAB18-dependent manner. Interacts with ZW10.

The protein resides in the golgi apparatus. The protein localises to the golgi stack. It localises to the endoplasmic reticulum. It is found in the preautophagosomal structure. Its subcellular location is the lipid droplet. The protein resides in the mitochondrion. Plays a role in the formation of lipid droplets (LDs) which are storage organelles at the center of lipid and energy homeostasis. Regulates the morphology, size and distribution of LDs. Mediates the formation of endoplasmic reticulum-lipid droplets (ER-LD) contact sites by forming a complex with RAB18 and ZW10. Binds to phosphatidylinositol 3-phosphate (PtdIns3P) through FYVE-type zinc finger. In Pongo abelii (Sumatran orangutan), this protein is Zinc finger FYVE domain-containing protein 1 (ZFYVE1).